The following is a 376-amino-acid chain: Formate dehydrogenase 2 (376 aa).

Residues V97 and N121 each coordinate substrate. NAD(+)-binding positions include 176-177, D197, 244-248, T270, D296, and 325-328; these read RI, PLHKD, and HISG.

It belongs to the D-isomer specific 2-hydroxyacid dehydrogenase family. FDH subfamily. As to quaternary structure, homodimer.

It is found in the cytoplasm. It carries out the reaction formate + NAD(+) = CO2 + NADH. Its function is as follows. Catalyzes the NAD(+)-dependent oxidation of formate to carbon dioxide. Formate oxidation is the final step in the methanol oxidation pathway in methylotrophic microorganisms. Has a role in the detoxification of exogenous formate in non-methylotrophic organisms. The protein is Formate dehydrogenase 2 (FDH2) of Saccharomyces cerevisiae (strain CEN.PK113-7D) (Baker's yeast).